The chain runs to 1879 residues: Protein TIC 214 (1879 aa).

6 helical membrane-spanning segments follow: residues 18-38 (IINS…FSIG), 64-84 (FITG…HLAL), 87-107 (PYTI…WTNP), 124-144 (LSIQ…HFIL), 172-192 (VGWL…LVWI), and 218-238 (IAPI…GRIP). Disordered stretches follow at residues 245–305 (ETSK…IDET) and 586–702 (ISTS…DEPM). 2 stretches are compositionally biased toward acidic residues: residues 253–268 (AETE…EIET) and 295–305 (EKEDPDKIDET). Low complexity predominate over residues 586–688 (ISTSTPTSTP…SIPASTSTST (103 aa)). Residues 691–701 (IKSKDEPKDEP) are compositionally biased toward basic and acidic residues.

The protein belongs to the TIC214 family. As to quaternary structure, part of the Tic complex.

It localises to the plastid. The protein localises to the chloroplast inner membrane. Its function is as follows. Involved in protein precursor import into chloroplasts. May be part of an intermediate translocation complex acting as a protein-conducting channel at the inner envelope. This is Protein TIC 214 from Cucumis sativus (Cucumber).